The following is a 155-amino-acid chain: Endoribonuclease YbeY (155 aa).

Residues His-114, His-118, and His-124 each contribute to the Zn(2+) site.

This sequence belongs to the endoribonuclease YbeY family. Zn(2+) serves as cofactor.

Its subcellular location is the cytoplasm. Single strand-specific metallo-endoribonuclease involved in late-stage 70S ribosome quality control and in maturation of the 3' terminus of the 16S rRNA. The chain is Endoribonuclease YbeY from Escherichia coli O1:K1 / APEC.